A 119-amino-acid polypeptide reads, in one-letter code: Large ribosomal subunit protein uL18 (119 aa).

The protein belongs to the universal ribosomal protein uL18 family. Part of the 50S ribosomal subunit; part of the 5S rRNA/L5/L18/L25 subcomplex. Contacts the 5S and 23S rRNAs.

Functionally, this is one of the proteins that bind and probably mediate the attachment of the 5S RNA into the large ribosomal subunit, where it forms part of the central protuberance. The sequence is that of Large ribosomal subunit protein uL18 from Xylella fastidiosa (strain 9a5c).